A 751-amino-acid chain; its full sequence is Photosystem I P700 chlorophyll a apoprotein A1 (751 aa).

Helical transmembrane passes span 71-94, 157-180, 196-220, 292-310, 347-370, 386-412, 434-456, and 532-550; these read VFSA…FHGA, LYCT…FHYH, LNHH…HVSL, IAHH…GHMY, WHAQ…HHMY, LSLF…IFMV, AIIS…LYIH, and FLVH…LILL. The [4Fe-4S] cluster site is built by Cys574 and Cys583. Helical transmembrane passes span 590–611 and 665–687; these read HVFL…HFSW and LSAY…MFLF. Residue His676 coordinates chlorophyll a'. Residues Met684 and Tyr692 each contribute to the chlorophyll a site. Trp693 is a phylloquinone binding site. A helical transmembrane segment spans residues 725–745; that stretch reads AVGVTHYLLGGIATTWAFFLA.

It belongs to the PsaA/PsaB family. The PsaA/B heterodimer binds the P700 chlorophyll special pair and subsequent electron acceptors. PSI consists of a core antenna complex that captures photons, and an electron transfer chain that converts photonic excitation into a charge separation. The eukaryotic PSI reaction center is composed of at least 11 subunits. P700 is a chlorophyll a/chlorophyll a' dimer, A0 is one or more chlorophyll a, A1 is one or both phylloquinones and FX is a shared 4Fe-4S iron-sulfur center. is required as a cofactor.

It is found in the plastid. The protein localises to the chloroplast thylakoid membrane. The catalysed reaction is reduced [plastocyanin] + hnu + oxidized [2Fe-2S]-[ferredoxin] = oxidized [plastocyanin] + reduced [2Fe-2S]-[ferredoxin]. PsaA and PsaB bind P700, the primary electron donor of photosystem I (PSI), as well as the electron acceptors A0, A1 and FX. PSI is a plastocyanin-ferredoxin oxidoreductase, converting photonic excitation into a charge separation, which transfers an electron from the donor P700 chlorophyll pair to the spectroscopically characterized acceptors A0, A1, FX, FA and FB in turn. Oxidized P700 is reduced on the lumenal side of the thylakoid membrane by plastocyanin. The polypeptide is Photosystem I P700 chlorophyll a apoprotein A1 (Zea mays (Maize)).